Consider the following 339-residue polypeptide: MSTAVVQADDLMEPSLQSIVSQDTLRWIFVGGKGGVGKTTTSCSLAIQLAKARKSVLLISTDPAHNLSDAFGQKFGKEARLVDGYTNLSAMEIDPNGSIQDLLASGEGQGDDPMAGLGVGNMMQDLAFSIPGVDEAMSFAEVLKQVKSLSYEVIVFDTAPTGHTLRFLQFPTVLEKALAKLSQLSSQFGPMLNSILGSRGGLPGGQNIDELLQKMESLRETISEVNTQFKNPDMTTFVCVCIAEFLSLYETERMIQELTSYNIDTHAIVVNQLLFPKQGSECEQCNARRKMQKKYLEQIEELYEDFNVVRMPLLVEEVRGKEKLEKFSDMLIHPYVPPQ.

Lysine 33–threonine 40 provides a ligand contact to ATP. Residue aspartate 62 is part of the active site. 2 residues coordinate ATP: glutamate 244 and asparagine 271. Zn(2+) is bound by residues cysteine 282 and cysteine 285.

It belongs to the arsA ATPase family. In terms of assembly, homodimer.

It is found in the cytoplasm. Its subcellular location is the endoplasmic reticulum. ATPase required for the post-translational delivery of tail-anchored (TA) proteins to the endoplasmic reticulum. Recognizes and selectively binds the transmembrane domain of TA proteins in the cytosol. This complex then targets to the endoplasmic reticulum by membrane-bound receptors, where the tail-anchored protein is released for insertion. This process is regulated by ATP binding and hydrolysis. ATP binding drives the homodimer towards the closed dimer state, facilitating recognition of newly synthesized TA membrane proteins. ATP hydrolysis is required for insertion. Subsequently, the homodimer reverts towards the open dimer state, lowering its affinity for the membrane-bound receptor, and returning it to the cytosol to initiate a new round of targeting. In Aspergillus flavus (strain ATCC 200026 / FGSC A1120 / IAM 13836 / NRRL 3357 / JCM 12722 / SRRC 167), this protein is ATPase get3 (get3).